The primary structure comprises 276 residues: MHPAAEHSPLGKSSEYIATYMPSLLFPIPRTAKWAELGVTAQTLPWHGVDYWNCFELSWLLPSGKPVVAIGEFAIPADSPNIIESKSFKLYLNSLNQTVFATIGELQACLEKDLSAAAGKPVSVQVRTLAEVEAQGVVALPGQCIDALDVTISNYEQPQPELLRCNPERVVEETLHSHLLKSNCPVTGQPDWGSVVVEYKGRALDHASLLTYLISFRQHADFHEQCVERIYLDLKNLLQPEHLTVYARYVRRGGLDINPYRSTGAISPENVRLVRQ.

83-85 (IES) serves as a coordination point for substrate. Residue 85–86 (SK) coordinates NADPH. Cys184 acts as the Thioimide intermediate in catalysis. Asp191 acts as the Proton donor in catalysis. Residue 223-224 (HE) participates in substrate binding. NADPH is bound at residue 252 to 253 (RG).

It belongs to the GTP cyclohydrolase I family. QueF type 2 subfamily. Homodimer.

The protein localises to the cytoplasm. It carries out the reaction 7-aminomethyl-7-carbaguanine + 2 NADP(+) = 7-cyano-7-deazaguanine + 2 NADPH + 3 H(+). The protein operates within tRNA modification; tRNA-queuosine biosynthesis. Its function is as follows. Catalyzes the NADPH-dependent reduction of 7-cyano-7-deazaguanine (preQ0) to 7-aminomethyl-7-deazaguanine (preQ1). The polypeptide is NADPH-dependent 7-cyano-7-deazaguanine reductase (Pseudomonas putida (strain W619)).